The sequence spans 163 residues: Lipoprotein signal peptidase (163 aa).

3 helical membrane passes run 8–28 (FFLLGLILTVGIDQAVKYWVM), 61–81 (FSHWGLIFLTLIILIFLLWLW), and 93–113 (FGFTLIIGGAIGNLIDRICFY). Catalysis depends on residues D117 and D136. The chain crosses the membrane as a helical span at residues 128–148 (YFAVFNLADTFITLGVIAIII).

The protein belongs to the peptidase A8 family.

It is found in the cell inner membrane. The catalysed reaction is Release of signal peptides from bacterial membrane prolipoproteins. Hydrolyzes -Xaa-Yaa-Zaa-|-(S,diacylglyceryl)Cys-, in which Xaa is hydrophobic (preferably Leu), and Yaa (Ala or Ser) and Zaa (Gly or Ala) have small, neutral side chains.. The protein operates within protein modification; lipoprotein biosynthesis (signal peptide cleavage). Its function is as follows. This protein specifically catalyzes the removal of signal peptides from prolipoproteins. In Bartonella henselae (strain ATCC 49882 / DSM 28221 / CCUG 30454 / Houston 1) (Rochalimaea henselae), this protein is Lipoprotein signal peptidase.